A 447-amino-acid polypeptide reads, in one-letter code: Chordin-like protein 1 (447 aa).

A signal peptide spans 1–22 (MDGMKYIISLFFIFVFLEGSKT). 2 VWFC domains span residues 30-95 (TYCV…PRCP) and 108-174 (KSCE…RVCR). Residue Asn113 is glycosylated (N-linked (GlcNAc...) asparagine). The Cell attachment site motif lies at 174-176 (RGD). The interval 200-224 (SYLRSPYDPPPNRQAGGLPRFPGSR) is disordered. A VWFC 3 domain is found at 253-318 (QVCVSNGKTY…IDGKCCKVCP (66 aa)). Asn286 is a glycosylation site (N-linked (GlcNAc...) asparagine).

May be glycosylated. Expressed in heart, brain, lung, liver, kidney and testis.

It localises to the secreted. Seems to antagonize the function of BMP4 by binding to it and preventing its interaction with receptors. Alters the fate commitment of neural stem cells from gliogenesis to neurogenesis. Contributes to neuronal differentiation of neural stem cells in the brain by preventing the adoption of a glial fate. May play a crucial role in dorsoventral axis formation. Antagonizes the function of BMP7 and may thus play an important role in the embryonic bone formation. Shows no inhibitory effect on the inducing activity of BMP2. Plays a role during anterior segment eye development. The chain is Chordin-like protein 1 (Chrdl1) from Mus musculus (Mouse).